The primary structure comprises 342 residues: MATGTLTVDLGALVANYRTLDRLGPGATAAVVKADGYGLGAGLVSTGLAKAGACQFFVATAEEGVGLRQVLGPAPEINVFAGHMAGDTPLIRDAHLTPMLNSPKQVQRHRHVLPGHPYGIQLDTGMHRLGVQPADWPALRDQLHDATLLMSHLACADAPDHPQNAAQLAQFRALTDGIQTPRSLAATGGTLMGPDYHFDLIRPGVGLYGGLPFAGARPVVRLSLPVIQIRCVNPGATIGYGATYTATTPRQIATLSAGYADGLIRALSSKATLWDGDTPCPLVGRVSMDLLTVDVTDCDTPPEALDILGPHQTIDQLAEAAGTIGYEILTSLGPRYRRALTP.

Lysine 33 (proton acceptor; specific for D-alanine) is an active-site residue. Lysine 33 is modified (N6-(pyridoxal phosphate)lysine). Arginine 128 is a substrate binding site. Catalysis depends on tyrosine 240, which acts as the Proton acceptor; specific for L-alanine. Position 288 (methionine 288) interacts with substrate.

Belongs to the alanine racemase family. Requires pyridoxal 5'-phosphate as cofactor.

The enzyme catalyses L-alanine = D-alanine. It functions in the pathway amino-acid biosynthesis; D-alanine biosynthesis; D-alanine from L-alanine: step 1/1. Functionally, catalyzes the interconversion of L-alanine and D-alanine. May also act on other amino acids. In Jannaschia sp. (strain CCS1), this protein is Alanine racemase (alr).